The primary structure comprises 515 residues: Recombining binding protein suppressor of hairless-like protein (515 aa).

The disordered stretch occupies residues 1-40 (MDPRETTDPSLPPGPLTHLSLPDSSEVRLQSDGPSLLGSW). DNA-binding regions lie at residues 76-86 (QKSYGNEKRFF), 191-196 (SKPSQK), and 218-223 (RLRSQT). The region spanning 384–474 (PLISTLELSG…YPSPFSFTYT (91 aa)) is the IPT/TIG domain.

This sequence belongs to the Su(H) family. Interacts weakly with EBNA2. Does not interact with any Notch proteins. Highly expressed in lung. Also detected in spleen, and brain.

It localises to the nucleus. In terms of biological role, putative transcription factor, which cooperates with EBNA2 to activate transcription. This is Recombining binding protein suppressor of hairless-like protein (Rbpjl) from Mus musculus (Mouse).